A 461-amino-acid polypeptide reads, in one-letter code: Probable protein phosphatase 2C 40 (461 aa).

The tract at residues 34 to 63 (REASAERASASASAGAGGRERERRPSVAAG) is disordered. The PPM-type phosphatase domain occupies 57–321 (RPSVAAGQAC…DDTTCIVIDI (265 aa)). Positions 98, 99, 273, and 312 each coordinate Mn(2+). The segment covering 439–453 (KKEAMEGKRHSRDSS) has biased composition (basic and acidic residues). Residues 439-461 (KKEAMEGKRHSRDSSSRNSGSSE) form a disordered region.

It belongs to the PP2C family. Requires Mg(2+) as cofactor. Mn(2+) is required as a cofactor. As to expression, expressed in leaves, leaf sheaths, panicles, nodes and internodes. Expressed at low levels in roots and stems.

It is found in the nucleus. Its subcellular location is the cytoplasm. It carries out the reaction O-phospho-L-seryl-[protein] + H2O = L-seryl-[protein] + phosphate. The enzyme catalyses O-phospho-L-threonyl-[protein] + H2O = L-threonyl-[protein] + phosphate. Mediates the negative regulation of osmotic and salt stress tolerance through regulation of the jasmonate and abscisic acid signaling pathways and modulation of the raffinose family oligosaccharide metabolism pathway. This Oryza sativa subsp. japonica (Rice) protein is Probable protein phosphatase 2C 40.